The sequence spans 90 residues: SAGA-associated factor 11 (90 aa).

The SGF11-type zinc finger occupies 63–84 (FSCDNCGRKIAGGRFAQHINKC).

The protein belongs to the SGF11 family. Component of the 1.8 MDa SAGA transcription coactivator-HAT complex. SAGA is built of 5 distinct domains with specialized functions. Within the SAGA complex, SUS1, SGF11, SGF73 and UBP8 form an additional subcomplex of SAGA called the DUB module (deubiquitination module). Interacts directly with SGF73, SUS1 and UBP8.

Its subcellular location is the nucleus. Its function is as follows. Functions as a component of the transcription regulatory histone acetylation (HAT) complex SAGA. At the promoters, SAGA is required for recruitment of the basal transcription machinery. It influences RNA polymerase II transcriptional activity through different activities such as TBP interaction and promoter selectivity, interaction with transcription activators, and chromatin modification through histone acetylation and deubiquitination. SAGA acetylates nucleosomal histone H3 to some extent (to form H3K9ac, H3K14ac, H3K18ac and H3K23ac). SAGA interacts with DNA via upstream activating sequences (UASs). Involved in transcriptional regulation of a subset of SAGA-regulated genes. Within the SAGA complex, participates in a subcomplex, that specifically deubiquitinates histones H2B. This chain is SAGA-associated factor 11, found in Lodderomyces elongisporus (strain ATCC 11503 / CBS 2605 / JCM 1781 / NBRC 1676 / NRRL YB-4239) (Yeast).